The primary structure comprises 562 residues: Potassium-transporting ATPase potassium-binding subunit (562 aa).

A run of 12 helical transmembrane segments spans residues 6 to 26 (FLLIASFMVVLFVLSRPLGGF), 63 to 83 (ALAILCFNLLGIVLLFVLLMA), 132 to 152 (GLTVQNFLSAATGIAVAFALI), 175 to 195 (LYVLLPIALIIALIFVSQGVL), 253 to 273 (FVQMLAIFLIPCALCFAFGQV), 283 to 303 (LIWAMSLIFIVAVVVVMYAEL), 327 to 347 (FGILATSLYAVVTTAASCGAV), 356 to 376 (ALGGMIPLWLMQIGEVVFGGV), 379 to 399 (GLYGMLLFVLLTVFIAGLMIG), 416 to 436 (MTALAILVTPTIVLLGTALAL), 483 to 503 (LLLAAAMFIGRFGVILPVLAI), and 526 to 546 (LFIGLLIGTVLLVGALTFIPA).

It belongs to the KdpA family. The system is composed of three essential subunits: KdpA, KdpB and KdpC.

Its subcellular location is the cell inner membrane. Part of the high-affinity ATP-driven potassium transport (or Kdp) system, which catalyzes the hydrolysis of ATP coupled with the electrogenic transport of potassium into the cytoplasm. This subunit binds the periplasmic potassium ions and delivers the ions to the membrane domain of KdpB through an intramembrane tunnel. This Yersinia pseudotuberculosis serotype O:1b (strain IP 31758) protein is Potassium-transporting ATPase potassium-binding subunit.